Consider the following 65-residue polypeptide: Large ribosomal subunit protein bL32 (65 aa).

Belongs to the bacterial ribosomal protein bL32 family.

The chain is Large ribosomal subunit protein bL32 from Metamycoplasma arthritidis (strain 158L3-1) (Mycoplasma arthritidis).